A 399-amino-acid chain; its full sequence is Elongation factor Tu (399 aa).

Residues 10–209 enclose the tr-type G domain; that stretch reads KPHVNIGTIG…EVDAYIPTPV (200 aa). The tract at residues 19–26 is G1; it reads GHVDHGKT. 19-26 is a GTP binding site; that stretch reads GHVDHGKT. Thr-26 serves as a coordination point for Mg(2+). Positions 60–64 are G2; sequence GITIA. The interval 81–84 is G3; the sequence is DCPG. GTP contacts are provided by residues 81 to 85 and 136 to 139; these read DCPGH and NKQD. The interval 136-139 is G4; sequence NKQD. A G5 region spans residues 174–176; sequence SAL.

The protein belongs to the TRAFAC class translation factor GTPase superfamily. Classic translation factor GTPase family. EF-Tu/EF-1A subfamily. Monomer.

It is found in the cytoplasm. It catalyses the reaction GTP + H2O = GDP + phosphate + H(+). Functionally, GTP hydrolase that promotes the GTP-dependent binding of aminoacyl-tRNA to the A-site of ribosomes during protein biosynthesis. The polypeptide is Elongation factor Tu (Helicobacter acinonychis (strain Sheeba)).